Consider the following 490-residue polypeptide: uncharacterized protein (490 aa).

A signal peptide spans 1–19 (MSITSVSLYVYLICAGGHA).

This sequence belongs to the mimivirus L137 family.

This is an uncharacterized protein from Acanthamoeba polyphaga (Amoeba).